Reading from the N-terminus, the 155-residue chain is Ribosomal RNA large subunit methyltransferase H (155 aa).

S-adenosyl-L-methionine-binding positions include L73, G104, and 123-128 (LSPLTL).

It belongs to the RNA methyltransferase RlmH family. As to quaternary structure, homodimer.

Its subcellular location is the cytoplasm. It catalyses the reaction pseudouridine(1915) in 23S rRNA + S-adenosyl-L-methionine = N(3)-methylpseudouridine(1915) in 23S rRNA + S-adenosyl-L-homocysteine + H(+). Specifically methylates the pseudouridine at position 1915 (m3Psi1915) in 23S rRNA. In Stutzerimonas stutzeri (strain A1501) (Pseudomonas stutzeri), this protein is Ribosomal RNA large subunit methyltransferase H.